The following is a 931-amino-acid chain: Synaptopodin (931 aa).

Disordered regions lie at residues Glu-56–Ile-78 and Ala-113–Tyr-243. At Ser-134 the chain carries Phosphoserine. The segment covering Thr-136–Gln-148 has biased composition (basic and acidic residues). 2 stretches are compositionally biased toward polar residues: residues Gln-153–Gly-164 and Pro-188–Pro-200. Phosphoserine occurs at positions 202, 222, and 258. Positions Pro-214–Ser-232 are enriched in low complexity. The tract at residues Gly-280 to Leu-420 is disordered. Polar residues-rich tracts occupy residues His-282–Ser-293 and Ile-309–Ser-370. Residues Asp-373–Arg-384 show a composition bias toward basic and acidic residues. Residues Ser-490 and Ser-514 each carry the phosphoserine modification. Disordered stretches follow at residues Arg-542 to Val-591 and Ser-691 to Gly-711. A Phosphothreonine modification is found at Thr-549. Positions Pro-551 to Tyr-554 match the PPxY motif motif. A compositionally biased stretch (polar residues) spans Glu-556–Arg-568. The residue at position 569 (Ser-569) is a Phosphoserine. Over residues Ser-569 to Ser-580 the composition is skewed to low complexity. The PPxY motif motif lies at Pro-570–Tyr-573. 4 positions are modified to phosphoserine: Ser-691, Ser-742, Ser-746, and Ser-767. Position 771 is a phosphothreonine (Thr-771). Positions Ser-775–Gly-918 are disordered. Residues Ser-816 to Ser-841 are compositionally biased toward low complexity. Residue Ser-835 is modified to Phosphoserine. Arg-850 is modified (omega-N-methylarginine). At Ser-856 the chain carries Phosphoserine. Over residues Val-874–Ser-895 the composition is skewed to polar residues.

Belongs to the synaptopodin family. In terms of assembly, interacts with BAIAP1. Interacts with actin. Interacts (via PPxY motifs) with WWC1 (via WW domains). In terms of processing, O-glycosylated. Expressed at high levels in brain and at moderate, but still significant levels in the heart, skeletal muscle, lung and kidney. In brain, expressed in the cerebral cortex, hippocampus, olfactory bulb and striatum.

The protein resides in the cytoplasm. It is found in the cytoskeleton. It localises to the cell junction. The protein localises to the tight junction. Its subcellular location is the perikaryon. The protein resides in the cell projection. It is found in the dendritic spine. It localises to the postsynaptic density. The protein localises to the synapse. Its subcellular location is the cytosol. Its function is as follows. Actin-associated protein that may play a role in modulating actin-based shape and motility of dendritic spines and renal podocyte foot processes. Seems to be essential for the formation of spine apparatuses in spines of telencephalic neurons, which is involved in synaptic plasticity. The polypeptide is Synaptopodin (Synpo) (Rattus norvegicus (Rat)).